The following is a 1166-amino-acid chain: Zinc finger CCHC domain-containing protein 2 (1166 aa).

4 disordered regions span residues 1–85 (MLRM…GGHA), 205–240 (RAEG…CAKL), 550–668 (SSAD…ARFS), and 904–982 (PASF…ISAV). Positions 43 to 64 (PPPPPTGLPRGPPPPPSPPRGL) are enriched in pro residues. Positions 65 to 76 (EPPVASGPTAGA) are enriched in low complexity. Residues 214–223 (EDEPSGDGEQ) are compositionally biased toward acidic residues. The span at 572–587 (PQVEKEKVKKTEDRLN) shows a compositional bias: basic and acidic residues. Residues 624–633 (SSESYSSPSS) show a composition bias toward low complexity. Positions 634–653 (PRHDGRESLESEEEKDRDSD) are enriched in basic and acidic residues. The segment covering 919–947 (LPTQNSSALNAATSAQPASTGISPSQSTV) has biased composition (polar residues). A compositionally biased stretch (pro residues) spans 949 to 963 (PAVPTHTPGPAPSPS). Residues 964–982 (PALTHSTAQSDSTSYISAV) are compositionally biased toward polar residues. The CCHC-type zinc finger occupies 1119 to 1136 (VSCYNCGVSGHYAQDCKQ).

The chain is Zinc finger CCHC domain-containing protein 2 (Zcchc2) from Mus musculus (Mouse).